Here is a 310-residue protein sequence, read N- to C-terminus: Ribosomal RNA small subunit methyltransferase H (310 aa).

Residues 32–34 (AGH), aspartate 51, phenylalanine 78, aspartate 99, and glutamine 106 each bind S-adenosyl-L-methionine.

It belongs to the methyltransferase superfamily. RsmH family.

It is found in the cytoplasm. The catalysed reaction is cytidine(1402) in 16S rRNA + S-adenosyl-L-methionine = N(4)-methylcytidine(1402) in 16S rRNA + S-adenosyl-L-homocysteine + H(+). Its function is as follows. Specifically methylates the N4 position of cytidine in position 1402 (C1402) of 16S rRNA. The polypeptide is Ribosomal RNA small subunit methyltransferase H (Macrococcus caseolyticus (strain JCSC5402) (Macrococcoides caseolyticum)).